The chain runs to 186 residues: Ribosome-recycling factor (186 aa).

It belongs to the RRF family.

The protein localises to the cytoplasm. In terms of biological role, responsible for the release of ribosomes from messenger RNA at the termination of protein biosynthesis. May increase the efficiency of translation by recycling ribosomes from one round of translation to another. The protein is Ribosome-recycling factor of Albidiferax ferrireducens (strain ATCC BAA-621 / DSM 15236 / T118) (Rhodoferax ferrireducens).